We begin with the raw amino-acid sequence, 151 residues long: Arginine repressor (151 aa).

Belongs to the ArgR family.

It is found in the cytoplasm. It participates in amino-acid biosynthesis; L-arginine biosynthesis [regulation]. Regulates arginine biosynthesis genes. This Moorella thermoacetica (strain ATCC 39073 / JCM 9320) protein is Arginine repressor.